A 370-amino-acid chain; its full sequence is Coiled-coil domain-containing protein 89 (370 aa).

The segment at 1–38 (MPQEESAPRMDTPSSEEPLDKQNRKLEDQEEEMGFKEL) is disordered. A Phosphothreonine modification is found at Thr-12. The segment covering 18-38 (PLDKQNRKLEDQEEEMGFKEL) has biased composition (basic and acidic residues). Residues 19–346 (LDKQNRKLED…YDELRLQSEA (328 aa)) are a coiled coil.

It belongs to the CCDC89 family. Interacts with HEY1.

The protein localises to the cytoplasm. The protein resides in the nucleus. In Bos taurus (Bovine), this protein is Coiled-coil domain-containing protein 89.